The primary structure comprises 70 residues: Large ribosomal subunit protein eL38 (70 aa).

The protein belongs to the eukaryotic ribosomal protein eL38 family.

This chain is Large ribosomal subunit protein eL38 (RpL38), found in Drosophila melanogaster (Fruit fly).